The following is a 272-amino-acid chain: Bis(5'-nucleosyl)-tetraphosphatase, symmetrical (272 aa).

Belongs to the Ap4A hydrolase family.

The catalysed reaction is P(1),P(4)-bis(5'-adenosyl) tetraphosphate + H2O = 2 ADP + 2 H(+). In terms of biological role, hydrolyzes diadenosine 5',5'''-P1,P4-tetraphosphate to yield ADP. The sequence is that of Bis(5'-nucleosyl)-tetraphosphatase, symmetrical from Chromohalobacter salexigens (strain ATCC BAA-138 / DSM 3043 / CIP 106854 / NCIMB 13768 / 1H11).